The sequence spans 190 residues: dCTP deaminase, dUMP-forming (190 aa).

DCTP is bound by residues 101–106 (KSSLGR), Asp-119, 127–129 (TLE), Gln-148, Tyr-162, Lys-170, and Gln-174. The active-site Proton donor/acceptor is the Glu-129. The disordered stretch occupies residues 160–190 (HPYGSSRAGSKYQGQRGPTPSRSYQNFIRST). Positions 171–190 (YQGQRGPTPSRSYQNFIRST) are enriched in polar residues.

Belongs to the dCTP deaminase family. Homotrimer.

It catalyses the reaction dCTP + 2 H2O = dUMP + NH4(+) + diphosphate. The protein operates within pyrimidine metabolism; dUMP biosynthesis; dUMP from dCTP: step 1/1. Its function is as follows. Bifunctional enzyme that catalyzes both the deamination of dCTP to dUTP and the hydrolysis of dUTP to dUMP without releasing the toxic dUTP intermediate. This Mycobacterium tuberculosis (strain ATCC 25177 / H37Ra) protein is dCTP deaminase, dUMP-forming.